The sequence spans 183 residues: Adenylate kinase (183 aa).

An ATP-binding site is contributed by G12–T17. The interval S32–V61 is NMP. AMP contacts are provided by residues T33, R38, E59–V61, G86–R89, and Q93. Residues S127–D133 are LID. Position 128 (R128) interacts with ATP. R130 and R141 together coordinate AMP. G169 serves as a coordination point for ATP.

Belongs to the adenylate kinase family. In terms of assembly, monomer.

The protein localises to the cytoplasm. The enzyme catalyses AMP + ATP = 2 ADP. The protein operates within purine metabolism; AMP biosynthesis via salvage pathway; AMP from ADP: step 1/1. Its function is as follows. Catalyzes the reversible transfer of the terminal phosphate group between ATP and AMP. Plays an important role in cellular energy homeostasis and in adenine nucleotide metabolism. The sequence is that of Adenylate kinase from Synechococcus sp. (strain CC9311).